The following is a 315-amino-acid chain: Acetaldehyde dehydrogenase 1 (315 aa).

12–15 (SGNI) is an NAD(+) binding site. Cys-132 acts as the Acyl-thioester intermediate in catalysis. NAD(+) contacts are provided by residues 163-171 (SAGPGTRAN) and Asn-291.

Belongs to the acetaldehyde dehydrogenase family.

It carries out the reaction acetaldehyde + NAD(+) + CoA = acetyl-CoA + NADH + H(+). In Paraburkholderia phymatum (strain DSM 17167 / CIP 108236 / LMG 21445 / STM815) (Burkholderia phymatum), this protein is Acetaldehyde dehydrogenase 1.